The following is a 61-amino-acid chain: Large ribosomal subunit protein bL32c (61 aa).

The segment at 37–61 (SRSFSSGNEHPKPKGFSGQQQQTNK) is disordered.

The protein belongs to the bacterial ribosomal protein bL32 family.

Its subcellular location is the plastid. The protein resides in the chloroplast. The polypeptide is Large ribosomal subunit protein bL32c (Agrostis stolonifera (Creeping bentgrass)).